We begin with the raw amino-acid sequence, 530 residues long: Ubiquitin carboxyl-terminal hydrolase 17-like protein 20 (530 aa).

Positions 80-375 (AGLQNMGNTC…QAYVLFYIQK (296 aa)) constitute a USP domain. Cys89 serves as the catalytic Nucleophile. The Proton acceptor role is filled by His334. Composition is skewed to basic and acidic residues over residues 382 to 392 (SESVSRGREPR) and 398 to 413 (DTDR…RDHP). 2 disordered regions span residues 382 to 413 (SESV…RDHP) and 509 to 530 (RGRA…LVCQ). Basic residues predominate over residues 510–524 (GRARRSKGKNKHSKR).

This sequence belongs to the peptidase C19 family. USP17 subfamily.

It is found in the nucleus. The protein localises to the endoplasmic reticulum. It catalyses the reaction Thiol-dependent hydrolysis of ester, thioester, amide, peptide and isopeptide bonds formed by the C-terminal Gly of ubiquitin (a 76-residue protein attached to proteins as an intracellular targeting signal).. Deubiquitinating enzyme that removes conjugated ubiquitin from specific proteins to regulate different cellular processes that may include cell proliferation, progression through the cell cycle, apoptosis, cell migration, and the cellular response to viral infection. This Homo sapiens (Human) protein is Ubiquitin carboxyl-terminal hydrolase 17-like protein 20 (USP17L20).